The chain runs to 210 residues: N-(5'-phosphoribosyl)anthranilate isomerase (210 aa).

Belongs to the TrpF family.

It catalyses the reaction N-(5-phospho-beta-D-ribosyl)anthranilate = 1-(2-carboxyphenylamino)-1-deoxy-D-ribulose 5-phosphate. The protein operates within amino-acid biosynthesis; L-tryptophan biosynthesis; L-tryptophan from chorismate: step 3/5. The polypeptide is N-(5'-phosphoribosyl)anthranilate isomerase (Staphylococcus aureus (strain MRSA252)).